The primary structure comprises 53 residues: ATP synthase protein 8 (53 aa).

The chain crosses the membrane as a helical span at residues W9–W29.

Belongs to the ATPase protein 8 family. F-type ATPases have 2 components, CF(1) - the catalytic core - and CF(0) - the membrane proton channel.

It localises to the mitochondrion membrane. Functionally, mitochondrial membrane ATP synthase (F(1)F(0) ATP synthase or Complex V) produces ATP from ADP in the presence of a proton gradient across the membrane which is generated by electron transport complexes of the respiratory chain. F-type ATPases consist of two structural domains, F(1) - containing the extramembraneous catalytic core and F(0) - containing the membrane proton channel, linked together by a central stalk and a peripheral stalk. During catalysis, ATP synthesis in the catalytic domain of F(1) is coupled via a rotary mechanism of the central stalk subunits to proton translocation. Part of the complex F(0) domain. Minor subunit located with subunit a in the membrane. The sequence is that of ATP synthase protein 8 (MT-ATP8) from Lumbricus terrestris (Common earthworm).